The sequence spans 408 residues: Secreted mono- and diacylglycerol lipase 2 (408 aa).

The N-terminal stretch at methionine 1 to alanine 24 is a signal peptide. Residue asparagine 177 is glycosylated (N-linked (GlcNAc...) asparagine). The active-site Nucleophile is the serine 217. Catalysis depends on residues aspartate 283 and histidine 374.

Belongs to the AB hydrolase superfamily. Lipase family. Class 3 subfamily.

The protein localises to the secreted. It carries out the reaction a monoacylglycerol + H2O = glycerol + a fatty acid + H(+). The catalysed reaction is a diacylglycerol + H2O = a monoacylglycerol + a fatty acid + H(+). Its function is as follows. Secreted mono- and diacylglycerol lipase involved in plant virulence. Has a substrate preference for p-nitrophenyl esters with a carbon chain length of C10 (p-nitrophenyl caprate). The polypeptide is Secreted mono- and diacylglycerol lipase 2 (Gibberella zeae (strain ATCC MYA-4620 / CBS 123657 / FGSC 9075 / NRRL 31084 / PH-1) (Wheat head blight fungus)).